The chain runs to 350 residues: 4-hydroxy-2-oxovalerate aldolase 3 (350 aa).

Positions 13-265 (VVFHDMCLRD…DTGVDLFRLM (253 aa)) constitute a Pyruvate carboxyltransferase domain. 21-22 (RD) lines the substrate pocket. Asp22 is a binding site for Mn(2+). The active-site Proton acceptor is the His25. The substrate site is built by Ser175 and His204. Residues His204 and His206 each contribute to the Mn(2+) site. Substrate is bound at residue Tyr295.

Belongs to the 4-hydroxy-2-oxovalerate aldolase family.

It catalyses the reaction (S)-4-hydroxy-2-oxopentanoate = acetaldehyde + pyruvate. The chain is 4-hydroxy-2-oxovalerate aldolase 3 (lapG) from Azotobacter vinelandii (strain DJ / ATCC BAA-1303).